The following is a 217-amino-acid chain: Glycerol-3-phosphate acyltransferase (217 aa).

Helical transmembrane passes span 3–23 (IVIL…VWIG), 56–76 (VLLM…LFGL), 78–98 (GVNP…PIFA), 120–140 (FFIY…MVSL), 142–162 (SMIS…TVPA), and 163–183 (ILPT…TFIF).

The protein belongs to the PlsY family. In terms of assembly, probably interacts with PlsX.

It is found in the cell membrane. The catalysed reaction is an acyl phosphate + sn-glycerol 3-phosphate = a 1-acyl-sn-glycero-3-phosphate + phosphate. It functions in the pathway lipid metabolism; phospholipid metabolism. Functionally, catalyzes the transfer of an acyl group from acyl-phosphate (acyl-PO(4)) to glycerol-3-phosphate (G3P) to form lysophosphatidic acid (LPA). This enzyme utilizes acyl-phosphate as fatty acyl donor, but not acyl-CoA or acyl-ACP. The sequence is that of Glycerol-3-phosphate acyltransferase from Enterococcus faecalis (strain ATCC 700802 / V583).